Consider the following 303-residue polypeptide: Coenzyme PQQ synthesis protein B (303 aa).

This sequence belongs to the PqqB family.

Its pathway is cofactor biosynthesis; pyrroloquinoline quinone biosynthesis. In terms of biological role, may be involved in the transport of PQQ or its precursor to the periplasm. This is Coenzyme PQQ synthesis protein B from Acinetobacter baumannii (strain AYE).